The sequence spans 57 residues: Potassium channel toxin alpha-KTx 8.2 (57 aa).

The N-terminal stretch at 1 to 28 is a signal peptide; that stretch reads MSRLYAIILIALVFNVVMTITPDMKVEA. Disulfide bonds link Cys31–Cys47, Cys34–Cys52, and Cys38–Cys54.

The protein belongs to the short scorpion toxin superfamily. Potassium channel inhibitor family. Alpha-KTx 08 subfamily. In terms of tissue distribution, expressed by the venom gland.

The protein resides in the secreted. Its function is as follows. This toxin inhibits rKv1.1/KCNA1 (100% inhibition at 3 uM), Kv1.3/KCNA3 (human, mouse and rat) (IC(50)=269-467 nM), shaker IR (60% at 3 uM) and activates the mouse capsaicin receptor TRPV1 (EC(50)=132 uM, at 20 degrees Celsius), a non-selective cation channel expressed by sensory neurons of the pain pathway. In vivo, intraplantar injection of this toxin in WT mice hind paw shows significant acute pain, whereas no pain is observed when the toxin is injected into TRPV1 KO mice. In addition, subcutaneous injection into mice (185 mg) produces an excitation of the animal, but no lethality, whereas injection into cockroaches does not provoke lethality as well. This chain is Potassium channel toxin alpha-KTx 8.2, found in Olivierus martensii (Manchurian scorpion).